The sequence spans 202 residues: Superoxide dismutase [Fe] (202 aa).

Residues H27, H82, D164, and H168 each coordinate Fe cation.

It belongs to the iron/manganese superoxide dismutase family. Homodimer. It depends on Fe cation as a cofactor.

The catalysed reaction is 2 superoxide + 2 H(+) = H2O2 + O2. Its function is as follows. Destroys superoxide anion radicals which are normally produced within the cells and which are toxic to biological systems. In Enterococcus faecalis (strain ATCC 700802 / V583), this protein is Superoxide dismutase [Fe] (sodA).